Consider the following 385-residue polypeptide: Polyketide synthase 2 (385 aa).

Residue C157 is part of the active site.

This sequence belongs to the thiolase-like superfamily. Chalcone/stilbene synthases family. In terms of tissue distribution, expressed in leaves and glandular trichomes.

It localises to the cytoplasm. Functionally, polyketide synthase responsible for the biosynthesis of secondary metabolites. The polypeptide is Polyketide synthase 2 (PKSG2) (Cannabis sativa (Hemp)).